The primary structure comprises 108 residues: Synaptic plasticity regulator PANTS (108 aa).

The interval 58–108 is disordered; sequence KNHSTQAKDSLQESERKRLADQRKFTPVWELRQKPPSDWHLPLNQGEPQDP. Residues 67 to 81 show a composition bias toward basic and acidic residues; it reads SLQESERKRLADQRK.

The protein belongs to the UPF0545 family. Rapidly degraded by proteolysis following neuronal stimulation, resulting in increased AMPA receptor clustering.

The protein resides in the synapse. It is found in the synaptic cleft. In terms of biological role, negatively regulates long-term potentiation and modulates adult synaptic plasticity. This chain is Synaptic plasticity regulator PANTS, found in Danio rerio (Zebrafish).